Reading from the N-terminus, the 186-residue chain is Bis(5'-nucleosyl)-tetraphosphatase, symmetrical (186 aa).

In terms of domain architecture, HD spans 18 to 132 (RYIHTVGVMN…IYVADYIEPN (115 aa)). H21 serves as a coordination point for ADP. Positions 21, 50, and 51 each coordinate Fe cation. Residues 51–54 (DYAK), H83, 109–110 (HT), D127, R133, and 170–175 (PVFPDT) contribute to the ADP site. Residue D127 participates in Fe cation binding.

The protein belongs to the Ap4A hydrolase YqeK family. As to quaternary structure, homodimer.

It carries out the reaction P(1),P(4)-bis(5'-adenosyl) tetraphosphate + H2O = 2 ADP + 2 H(+). In terms of biological role, hydrolyzes diadenosine 5',5'''-P1,P4-tetraphosphate (Ap4A) to yield ADP. The protein is Bis(5'-nucleosyl)-tetraphosphatase, symmetrical (yqeK) of Bacillus subtilis (strain 168).